The primary structure comprises 296 residues: Ribosomal RNA small subunit methyltransferase J (296 aa).

Residue aspartate 205 coordinates S-adenosyl-L-methionine.

Belongs to the methyltransferase superfamily. RsmJ family.

It localises to the cytoplasm. The enzyme catalyses guanosine(1516) in 16S rRNA + S-adenosyl-L-methionine = N(2)-methylguanosine(1516) in 16S rRNA + S-adenosyl-L-homocysteine + H(+). Its function is as follows. Specifically methylates the guanosine in position 1516 of 16S rRNA. This Psychrobacter arcticus (strain DSM 17307 / VKM B-2377 / 273-4) protein is Ribosomal RNA small subunit methyltransferase J.